The following is a 482-amino-acid chain: tRNA sulfurtransferase (482 aa).

The THUMP domain maps to 61–165; sequence DVTLSVLTQT…NDKLNLIIAR (105 aa). ATP contacts are provided by residues 183–184, K265, G287, and Q296; that span reads LI. An intrachain disulfide couples C344 to C456. The region spanning 404 to 482 is the Rhodanese domain; it reads LGSDVVVLDI…GYKNVKVYRP (79 aa). The active-site Cysteine persulfide intermediate is the C456.

Belongs to the ThiI family.

It localises to the cytoplasm. It catalyses the reaction [ThiI sulfur-carrier protein]-S-sulfanyl-L-cysteine + a uridine in tRNA + 2 reduced [2Fe-2S]-[ferredoxin] + ATP + H(+) = [ThiI sulfur-carrier protein]-L-cysteine + a 4-thiouridine in tRNA + 2 oxidized [2Fe-2S]-[ferredoxin] + AMP + diphosphate. It carries out the reaction [ThiS sulfur-carrier protein]-C-terminal Gly-Gly-AMP + S-sulfanyl-L-cysteinyl-[cysteine desulfurase] + AH2 = [ThiS sulfur-carrier protein]-C-terminal-Gly-aminoethanethioate + L-cysteinyl-[cysteine desulfurase] + A + AMP + 2 H(+). It functions in the pathway cofactor biosynthesis; thiamine diphosphate biosynthesis. Functionally, catalyzes the ATP-dependent transfer of a sulfur to tRNA to produce 4-thiouridine in position 8 of tRNAs, which functions as a near-UV photosensor. Also catalyzes the transfer of sulfur to the sulfur carrier protein ThiS, forming ThiS-thiocarboxylate. This is a step in the synthesis of thiazole, in the thiamine biosynthesis pathway. The sulfur is donated as persulfide by IscS. The sequence is that of tRNA sulfurtransferase from Aliivibrio fischeri (strain MJ11) (Vibrio fischeri).